Here is a 548-residue protein sequence, read N- to C-terminus: Chaperonin GroEL (548 aa).

ATP is bound by residues 30–33, Lys51, 87–91, Gly415, and Asp495; these read TLGP and DGTTT.

It belongs to the chaperonin (HSP60) family. In terms of assembly, forms a cylinder of 14 subunits composed of two heptameric rings stacked back-to-back. Interacts with the co-chaperonin GroES.

The protein localises to the cytoplasm. The catalysed reaction is ATP + H2O + a folded polypeptide = ADP + phosphate + an unfolded polypeptide.. Functionally, together with its co-chaperonin GroES, plays an essential role in assisting protein folding. The GroEL-GroES system forms a nano-cage that allows encapsulation of the non-native substrate proteins and provides a physical environment optimized to promote and accelerate protein folding. The polypeptide is Chaperonin GroEL (Idiomarina loihiensis (strain ATCC BAA-735 / DSM 15497 / L2-TR)).